The following is a 64-amino-acid chain: Large ribosomal subunit protein bL28 (64 aa).

Belongs to the bacterial ribosomal protein bL28 family.

The protein is Large ribosomal subunit protein bL28 of Syntrophobacter fumaroxidans (strain DSM 10017 / MPOB).